We begin with the raw amino-acid sequence, 179 residues long: MSSFKEFYTTEVVPKLQETFGYKNVMQIPKLEKIVLNMGLGEAISNIKIIDSAVEELKLISGQQPVIRRARKSIAAFKLRQGMPVGCMVTLRHERMYDFFNKLVNIALPRVRDFRGISGQAFDGQGNYTLGVREQIIFPEIEYDKIDKIKGLNITIVTSVQKDDEARELLRLMGMPFKN.

The protein belongs to the universal ribosomal protein uL5 family. As to quaternary structure, part of the 50S ribosomal subunit; part of the 5S rRNA/L5/L18/L25 subcomplex. Contacts the 5S rRNA and the P site tRNA. Forms a bridge to the 30S subunit in the 70S ribosome.

This is one of the proteins that bind and probably mediate the attachment of the 5S RNA into the large ribosomal subunit, where it forms part of the central protuberance. In the 70S ribosome it contacts protein S13 of the 30S subunit (bridge B1b), connecting the 2 subunits; this bridge is implicated in subunit movement. Contacts the P site tRNA; the 5S rRNA and some of its associated proteins might help stabilize positioning of ribosome-bound tRNAs. In Desulfosudis oleivorans (strain DSM 6200 / JCM 39069 / Hxd3) (Desulfococcus oleovorans), this protein is Large ribosomal subunit protein uL5.